We begin with the raw amino-acid sequence, 443 residues long: Xaa-Pro dipeptidase (443 aa).

Aspartate 246, aspartate 257, histidine 339, glutamate 384, and glutamate 423 together coordinate Mn(2+).

This sequence belongs to the peptidase M24B family. Bacterial-type prolidase subfamily. It depends on Mn(2+) as a cofactor.

It catalyses the reaction Xaa-L-Pro dipeptide + H2O = an L-alpha-amino acid + L-proline. In terms of biological role, splits dipeptides with a prolyl residue in the C-terminal position. This Citrobacter koseri (strain ATCC BAA-895 / CDC 4225-83 / SGSC4696) protein is Xaa-Pro dipeptidase.